The sequence spans 211 residues: Protein-L-isoaspartate O-methyltransferase (211 aa).

The active site involves serine 62.

It belongs to the methyltransferase superfamily. L-isoaspartyl/D-aspartyl protein methyltransferase family.

The protein resides in the cytoplasm. The catalysed reaction is [protein]-L-isoaspartate + S-adenosyl-L-methionine = [protein]-L-isoaspartate alpha-methyl ester + S-adenosyl-L-homocysteine. In terms of biological role, catalyzes the methyl esterification of L-isoaspartyl residues in peptides and proteins that result from spontaneous decomposition of normal L-aspartyl and L-asparaginyl residues. It plays a role in the repair and/or degradation of damaged proteins. This Shewanella oneidensis (strain ATCC 700550 / JCM 31522 / CIP 106686 / LMG 19005 / NCIMB 14063 / MR-1) protein is Protein-L-isoaspartate O-methyltransferase.